The sequence spans 367 residues: F-box protein At3g56470 (367 aa).

Basic residues predominate over residues 1–18; it reads MVTRRRSKKKKKTKRKKQ. A disordered region spans residues 1–24; sequence MVTRRRSKKKKKTKRKKQSSKEKE. The F-box domain occupies 26-81; that stretch reads YQTFINLPCDLLQLVISRLPLKDNIRASAVCKTWHEACVSLRVIHTSPWLIYFSKT.

The chain is F-box protein At3g56470 from Arabidopsis thaliana (Mouse-ear cress).